The sequence spans 1057 residues: Carbamoyl phosphate synthase large chain (1057 aa).

Residues 1-401 are carboxyphosphate synthetic domain; it reads MPKRQDIETI…SLLKAIRSLE (401 aa). ATP-binding residues include arginine 129, arginine 169, glycine 175, glycine 176, lysine 208, isoleucine 210, glutamate 215, glycine 241, isoleucine 242, histidine 243, glutamine 284, and glutamate 298. The ATP-grasp 1 domain maps to 133 to 327; sequence RTLMNDLGVP…IAKLAAKIAI (195 aa). Positions 284, 298, and 300 each coordinate Mg(2+). Mn(2+) contacts are provided by glutamine 284, glutamate 298, and asparagine 300. The tract at residues 402–546 is oligomerization domain; it reads YGVHHLGLPN…YGTYEYENES (145 aa). Residues 547–929 are carbamoyl phosphate synthetic domain; that stretch reads VVTEKEKILV…ALFKGLTASG (383 aa). Residues 671–861 form the ATP-grasp 2 domain; the sequence is EALLHTIDVP…MAQLAMRAII (191 aa). Arginine 707, arginine 746, leucine 748, glutamate 752, glycine 777, valine 778, histidine 779, serine 780, glutamine 820, and glutamate 832 together coordinate ATP. Residues glutamine 820, glutamate 832, and asparagine 834 each coordinate Mg(2+). Mn(2+) contacts are provided by glutamine 820, glutamate 832, and asparagine 834. Positions 930–1057 constitute an MGS-like domain; the sequence is MEVKDHGTVL…ESMTFTMKNM (128 aa). An allosteric domain region spans residues 930–1057; sequence MEVKDHGTVL…ESMTFTMKNM (128 aa).

It belongs to the CarB family. In terms of assembly, composed of two chains; the small (or glutamine) chain promotes the hydrolysis of glutamine to ammonia, which is used by the large (or ammonia) chain to synthesize carbamoyl phosphate. Tetramer of heterodimers (alpha,beta)4. Mg(2+) is required as a cofactor. It depends on Mn(2+) as a cofactor.

The enzyme catalyses hydrogencarbonate + L-glutamine + 2 ATP + H2O = carbamoyl phosphate + L-glutamate + 2 ADP + phosphate + 2 H(+). It catalyses the reaction hydrogencarbonate + NH4(+) + 2 ATP = carbamoyl phosphate + 2 ADP + phosphate + 2 H(+). Its pathway is amino-acid biosynthesis; L-arginine biosynthesis; carbamoyl phosphate from bicarbonate: step 1/1. The protein operates within pyrimidine metabolism; UMP biosynthesis via de novo pathway; (S)-dihydroorotate from bicarbonate: step 1/3. Large subunit of the glutamine-dependent carbamoyl phosphate synthetase (CPSase). CPSase catalyzes the formation of carbamoyl phosphate from the ammonia moiety of glutamine, carbonate, and phosphate donated by ATP, constituting the first step of 2 biosynthetic pathways, one leading to arginine and/or urea and the other to pyrimidine nucleotides. The large subunit (synthetase) binds the substrates ammonia (free or transferred from glutamine from the small subunit), hydrogencarbonate and ATP and carries out an ATP-coupled ligase reaction, activating hydrogencarbonate by forming carboxy phosphate which reacts with ammonia to form carbamoyl phosphate. This chain is Carbamoyl phosphate synthase large chain, found in Staphylococcus saprophyticus subsp. saprophyticus (strain ATCC 15305 / DSM 20229 / NCIMB 8711 / NCTC 7292 / S-41).